The sequence spans 369 residues: tRNA/tmRNA (uracil-C(5))-methyltransferase (369 aa).

S-adenosyl-L-methionine-binding residues include glutamine 190, tyrosine 218, asparagine 223, glutamate 239, and aspartate 301. Residue cysteine 326 is the Nucleophile of the active site. The Proton acceptor role is filled by glutamate 360.

Belongs to the class I-like SAM-binding methyltransferase superfamily. RNA M5U methyltransferase family. TrmA subfamily.

The enzyme catalyses uridine(54) in tRNA + S-adenosyl-L-methionine = 5-methyluridine(54) in tRNA + S-adenosyl-L-homocysteine + H(+). The catalysed reaction is uridine(341) in tmRNA + S-adenosyl-L-methionine = 5-methyluridine(341) in tmRNA + S-adenosyl-L-homocysteine + H(+). In terms of biological role, dual-specificity methyltransferase that catalyzes the formation of 5-methyluridine at position 54 (m5U54) in all tRNAs, and that of position 341 (m5U341) in tmRNA (transfer-mRNA). The sequence is that of tRNA/tmRNA (uracil-C(5))-methyltransferase from Vibrio vulnificus (strain CMCP6).